The following is a 96-amino-acid chain: uncharacterized protein (96 aa).

This is an uncharacterized protein from Saccharomyces cerevisiae (strain ATCC 204508 / S288c) (Baker's yeast).